The primary structure comprises 179 residues: MTLKNRYKESIRPKLLKDLGLKNIHQVPKVVKVNVNRGLGEAASNSKALEASLNEMATITGQKALVTRAKKAIAGFKIREGMPIGCTVTLRGDRMYSFLERFINLALPRIRDFRGVNPKSFDGRGNYTVGVKEQLIFPEISFDKIDSIRGMDITIVTSARSDQEGKALLQELGMPFSKN.

This sequence belongs to the universal ribosomal protein uL5 family. Part of the 50S ribosomal subunit; part of the 5S rRNA/L5/L18/L25 subcomplex. Contacts the 5S rRNA and the P site tRNA. Forms a bridge to the 30S subunit in the 70S ribosome.

This is one of the proteins that bind and probably mediate the attachment of the 5S RNA into the large ribosomal subunit, where it forms part of the central protuberance. In the 70S ribosome it contacts protein S13 of the 30S subunit (bridge B1b), connecting the 2 subunits; this bridge is implicated in subunit movement. Contacts the P site tRNA; the 5S rRNA and some of its associated proteins might help stabilize positioning of ribosome-bound tRNAs. This Prochlorococcus marinus (strain MIT 9301) protein is Large ribosomal subunit protein uL5.